The following is a 314-amino-acid chain: DNA-directed RNA polymerase subunit alpha (314 aa).

The tract at residues 1-227 is alpha N-terminal domain (alpha-NTD); that stretch reads MTTFEIECIE…ELLFPLKEIN (227 aa). The alpha C-terminal domain (alpha-CTD) stretch occupies residues 237-314; the sequence is IEDSKINQIL…LPKEKTSKSN (78 aa).

Belongs to the RNA polymerase alpha chain family. In terms of assembly, in plastids the minimal PEP RNA polymerase catalytic core is composed of four subunits: alpha, beta, beta', and beta''. When a (nuclear-encoded) sigma factor is associated with the core the holoenzyme is formed, which can initiate transcription.

The protein localises to the plastid. The protein resides in the chloroplast. It catalyses the reaction RNA(n) + a ribonucleoside 5'-triphosphate = RNA(n+1) + diphosphate. Its function is as follows. DNA-dependent RNA polymerase catalyzes the transcription of DNA into RNA using the four ribonucleoside triphosphates as substrates. This chain is DNA-directed RNA polymerase subunit alpha, found in Pyrenomonas salina.